Reading from the N-terminus, the 306-residue chain is Ribosomal RNA small subunit methyltransferase A (306 aa).

N37, V39, G64, E85, D115, and N134 together coordinate S-adenosyl-L-methionine.

The protein belongs to the class I-like SAM-binding methyltransferase superfamily. rRNA adenine N(6)-methyltransferase family. RsmA subfamily.

The protein resides in the cytoplasm. It carries out the reaction adenosine(1518)/adenosine(1519) in 16S rRNA + 4 S-adenosyl-L-methionine = N(6)-dimethyladenosine(1518)/N(6)-dimethyladenosine(1519) in 16S rRNA + 4 S-adenosyl-L-homocysteine + 4 H(+). Specifically dimethylates two adjacent adenosines (A1518 and A1519) in the loop of a conserved hairpin near the 3'-end of 16S rRNA in the 30S particle. May play a critical role in biogenesis of 30S subunits. This Mycobacterium leprae (strain Br4923) protein is Ribosomal RNA small subunit methyltransferase A.